Consider the following 158-residue polypeptide: Endoribonuclease YbeY (158 aa).

Zn(2+) contacts are provided by His117, His121, and His127.

Belongs to the endoribonuclease YbeY family. Zn(2+) is required as a cofactor.

The protein localises to the cytoplasm. Its function is as follows. Single strand-specific metallo-endoribonuclease involved in late-stage 70S ribosome quality control and in maturation of the 3' terminus of the 16S rRNA. This chain is Endoribonuclease YbeY, found in Francisella philomiragia subsp. philomiragia (strain ATCC 25017 / CCUG 19701 / FSC 153 / O#319-036).